The following is a 258-amino-acid chain: 1-(5-phosphoribosyl)-5-[(5-phosphoribosylamino)methylideneamino] imidazole-4-carboxamide isomerase 2 (258 aa).

The active-site Proton acceptor is the Asp-14. Asp-140 acts as the Proton donor in catalysis.

The protein belongs to the HisA/HisF family.

Its subcellular location is the cytoplasm. It carries out the reaction 1-(5-phospho-beta-D-ribosyl)-5-[(5-phospho-beta-D-ribosylamino)methylideneamino]imidazole-4-carboxamide = 5-[(5-phospho-1-deoxy-D-ribulos-1-ylimino)methylamino]-1-(5-phospho-beta-D-ribosyl)imidazole-4-carboxamide. It functions in the pathway amino-acid biosynthesis; L-histidine biosynthesis; L-histidine from 5-phospho-alpha-D-ribose 1-diphosphate: step 4/9. The protein is 1-(5-phosphoribosyl)-5-[(5-phosphoribosylamino)methylideneamino] imidazole-4-carboxamide isomerase 2 (hisA2) of Photorhabdus laumondii subsp. laumondii (strain DSM 15139 / CIP 105565 / TT01) (Photorhabdus luminescens subsp. laumondii).